The sequence spans 219 residues: Exosomal polycystin-1-interacting protein (219 aa).

The N-terminal stretch at 1–19 (MAPPSRHCLLLISTLGVFA) is a signal peptide. N-linked (GlcNAc...) asparagine glycans are attached at residues N29, N42, N95, N188, and N210.

The protein belongs to the EPCIP family. Homooligomer. Interacts with PKD1 (via the PKD repeats in the N-terminal extracellular region); the interaction is not dependent on N-glycosylation of either protein. In terms of processing, N-glycosylated. Detected in the kidney and in the endothelium of large blood vessels (at protein level).

It localises to the vesicle. It is found in the secreted. Its subcellular location is the extracellular exosome. Functionally, likely to be involved with PKD1 in the detection, sequestration and exocytosis of senescent mitochondria. The sequence is that of Exosomal polycystin-1-interacting protein from Homo sapiens (Human).